Reading from the N-terminus, the 294-residue chain is 4-hydroxy-tetrahydrodipicolinate synthase (294 aa).

Thr-48 contributes to the pyruvate binding site. The active-site Proton donor/acceptor is Tyr-136. The active-site Schiff-base intermediate with substrate is Lys-164. Residue Ile-206 participates in pyruvate binding.

It belongs to the DapA family. In terms of assembly, homotetramer; dimer of dimers.

It localises to the cytoplasm. The catalysed reaction is L-aspartate 4-semialdehyde + pyruvate = (2S,4S)-4-hydroxy-2,3,4,5-tetrahydrodipicolinate + H2O + H(+). It functions in the pathway amino-acid biosynthesis; L-lysine biosynthesis via DAP pathway; (S)-tetrahydrodipicolinate from L-aspartate: step 3/4. Functionally, catalyzes the condensation of (S)-aspartate-beta-semialdehyde [(S)-ASA] and pyruvate to 4-hydroxy-tetrahydrodipicolinate (HTPA). The chain is 4-hydroxy-tetrahydrodipicolinate synthase from Phenylobacterium zucineum (strain HLK1).